We begin with the raw amino-acid sequence, 360 residues long: 3-dehydroquinate synthase (360 aa).

Residues 71–76, 105–109, 129–130, Lys-142, and Lys-151 each bind NAD(+); these read DGEAHK, GVVGD, and TT. Residues Glu-184, His-247, and His-264 each coordinate Zn(2+).

Belongs to the sugar phosphate cyclases superfamily. Dehydroquinate synthase family. It depends on Co(2+) as a cofactor. Requires Zn(2+) as cofactor. NAD(+) is required as a cofactor.

The protein resides in the cytoplasm. It carries out the reaction 7-phospho-2-dehydro-3-deoxy-D-arabino-heptonate = 3-dehydroquinate + phosphate. It participates in metabolic intermediate biosynthesis; chorismate biosynthesis; chorismate from D-erythrose 4-phosphate and phosphoenolpyruvate: step 2/7. Functionally, catalyzes the conversion of 3-deoxy-D-arabino-heptulosonate 7-phosphate (DAHP) to dehydroquinate (DHQ). In Azoarcus sp. (strain BH72), this protein is 3-dehydroquinate synthase.